Here is a 63-residue protein sequence, read N- to C-terminus: Putative antitoxin AF_1084 (63 aa).

The protein belongs to the UPF0165 family.

Functionally, possibly the antitoxin component of a type II toxin-antitoxin (TA) system. In Archaeoglobus fulgidus (strain ATCC 49558 / DSM 4304 / JCM 9628 / NBRC 100126 / VC-16), this protein is Putative antitoxin AF_1084.